The sequence spans 229 residues: Protein 33K (229 aa).

Positions 1–157 (MAPKKKLQLP…GALRLAPNEP (157 aa)) are disordered. Residues 14 to 54 (TDEEEYWDSQAEEVLDEEEEDMMEDWESLDEEASEVEEVSD) are compositionally biased toward acidic residues. 3 stretches are compositionally biased toward low complexity: residues 55–64 (ETPSPSVAFP), 71–82 (SATGSSMATTSA), and 100–122 (TTGT…AAAT). Positions 172-199 (YAIFQQSRGQEQELKIKNRSLRSLTRSC) are necessary for nuclear subcellular location. The segment at 178–198 (SRGQEQELKIKNRSLRSLTRS) is RS-repeat; required for splicing enhancer activity.

The protein belongs to the adenoviridae splicing factor family. In terms of assembly, homooligomer. Interacts with DBP; this interaction occurs at a unique vertex during genome packaging. Interacts with IVa2; this interaction occurs at a unique vertex during genome packaging and seems to potentiate IVa2 and 33K oligomerization. Phosphorylated in vitro by human PKA and PRKDC. PRKDC inhibits, whereas PKA activates the splicing factor.

Its subcellular location is the host nucleus. In terms of biological role, promotes alternative splicing of late transcripts by promoting splicing at weak 3' splice sites. Required for the temporal activation of major late pre-mRNA splicing at late times of infection. Induces the splicing and expression of the late capsid vertex protein. Functionally, probably functions as the small terminase that is part of the molecular motor that translocates genomic DNA in empty capsid during DNA packaging. This motor is located at a unique vertex and comprises at least the IVa2 ATPase, the small terminase 33K and probably a portal. Forms a ring-like structure of about 17 nm in which genomic DNA is translocated into the capsid. Stimulates IVa2 ATPase activity in the presence of the viral genome. Once the DNA is packaged, the terminase detaches: the 33K protein is present in the empty particles, but not in the mature virions. Also involved in virion assembly. The polypeptide is Protein 33K (Homo sapiens (Human)).